The chain runs to 411 residues: Phospholipase A1-II 6 (411 aa).

The active-site Acyl-ester intermediate is serine 226. Active-site charge relay system residues include serine 226, aspartate 296, and histidine 334.

The protein belongs to the AB hydrolase superfamily. Lipase family.

Its subcellular location is the cytoplasm. Its function is as follows. Acylhydrolase that catalyzes the hydrolysis of phospholipids at the sn-1 position. The protein is Phospholipase A1-II 6 of Oryza sativa subsp. japonica (Rice).